The sequence spans 573 residues: MDNYRRLHTPVALCVASPPAPPTTSWKSMEGLVQCSANHVPLSPITFLERSSKAYRDNTSLVYGSVRYTWAQTHHRCLKLASALTTHFGISPGDVVATFSYNIPEIYELHFAVPMAGGILCTLNARNDSAMVSTLLAHSEAKLIFVEPQLLETARAALDLLAQKDIKPPTLVLLTDSESFTSSSYDHYNHLLANGSDDFEIRRPKNECDPISINYTSGTTARPKAVVYSHRGAYLNSIATVLLHGMGTRSVYLWSVPMFHCNGWCFPWGAAAQGATNICIRKVSPKAIFDNIHLHKVTHFGAAPTVLNMIVNSPEGNLHTPLPHKVEVMTGGSPPPPKVIARMEEMGFQVNHIYGLTETHGPATNCVCKPEWDALQPEERYALKARQGLNHLAMEEMDVRDPVSMESVRADGTTIGEVMFRGNTVMSGYFKDLKATEEAFEGGWFRTGDLGVKHEDGYIQLKDRKKDVVISGGENVSTVEVETVLYSHEAVLEAAVVARPDKLWGETPCAFVTLKEGFDNGVSADQIIKFCRDRLPHYMAPKTVVFEELPKTSTGKIQKYILKEKAKAMGSLS.

Residues 216-224 (TSGTTARPK), 352-357 (HIYGLT), Asp449, 461-464 (LKDR), and Lys556 each bind ATP. Positions 284-352 (SPKAIFDNIH…MEEMGFQVNH (69 aa)) are SBD1. The tract at residues 353–429 (IYGLTETHGP…FRGNTVMSGY (77 aa)) is SBD2.

It belongs to the ATP-dependent AMP-binding enzyme family.

Its subcellular location is the cytoplasm. The protein localises to the cytosol. This chain is Probable CoA ligase CCL13, found in Humulus lupulus (European hop).